The sequence spans 199 residues: DNA repair RAD52-like protein 2, chloroplastic (199 aa).

The transit peptide at 1–40 directs the protein to the chloroplast; that stretch reads MALQVQQTSAAFTISSPSTAAARIKLSPFRTVAVNRGVRC. Position 41 is an N-acetylserine (Ser-41).

The protein belongs to the RAD52 family. Expressed in roots and shoots. Expressed at low levels in cauline leaves, flower buds, flowers and siliques.

It localises to the plastid. The protein localises to the chloroplast. Involved in double-stranded DNA break repair. This is DNA repair RAD52-like protein 2, chloroplastic from Arabidopsis thaliana (Mouse-ear cress).